Consider the following 252-residue polypeptide: Probable endonuclease 4 (252 aa).

Residues histidine 56, histidine 96, glutamate 129, aspartate 162, histidine 165, histidine 191, aspartate 204, histidine 206, and glutamate 233 each coordinate Zn(2+).

Belongs to the AP endonuclease 2 family. Zn(2+) serves as cofactor.

It carries out the reaction Endonucleolytic cleavage to 5'-phosphooligonucleotide end-products.. Functionally, endonuclease IV plays a role in DNA repair. It cleaves phosphodiester bonds at apurinic or apyrimidinic (AP) sites, generating a 3'-hydroxyl group and a 5'-terminal sugar phosphate. The polypeptide is Probable endonuclease 4 (Mycobacterium leprae (strain Br4923)).